We begin with the raw amino-acid sequence, 290 residues long: MPSLKEVKTKITGVKKTSQITKAMNMVAASRLRGAQDKMESFRPYASKFSEAMSNLSGGGNTNAFPLMDVRDVKTVELIVVTSDRGLCGSFNANVVKLTEKKMAQYRAEGKKVSLICIGKKGYQLLRKSGAVRENYSDIMAHFSINNAREIASDVADNFLKGTADKVEIIYGAFKSVAVQAPVAEDLLPIQPVVSSEPAGEQTMSGDYIYEPSSEEIMDAMQPLYLNVLVYHAMLEVGASEHAARMTAMDNATTACRDIVSNLTIVYNKARQAAVTNELMDIVGGAEALK.

It belongs to the ATPase gamma chain family. In terms of assembly, F-type ATPases have 2 components, CF(1) - the catalytic core - and CF(0) - the membrane proton channel. CF(1) has five subunits: alpha(3), beta(3), gamma(1), delta(1), epsilon(1). CF(0) has three main subunits: a, b and c.

Its subcellular location is the cell inner membrane. Its function is as follows. Produces ATP from ADP in the presence of a proton gradient across the membrane. The gamma chain is believed to be important in regulating ATPase activity and the flow of protons through the CF(0) complex. The polypeptide is ATP synthase gamma chain (Desulfotalea psychrophila (strain LSv54 / DSM 12343)).